Reading from the N-terminus, the 265-residue chain is Methyl-coenzyme M reductase II subunit gamma (265 aa).

Residue arginine 123 coordinates coenzyme M.

The protein belongs to the methyl-coenzyme M reductase gamma subunit family. As to quaternary structure, MCR is a hexamer of two alpha, two beta, and two gamma chains, forming a dimer of heterotrimers. Coenzyme F430 is required as a cofactor.

It catalyses the reaction coenzyme B + methyl-coenzyme M = methane + coenzyme M-coenzyme B heterodisulfide. The protein operates within one-carbon metabolism; methyl-coenzyme M reduction; methane from methyl-coenzyme M: step 1/1. Component of the methyl-coenzyme M reductase (MCR) I that catalyzes the reductive cleavage of methyl-coenzyme M (CoM-S-CH3 or 2-(methylthio)ethanesulfonate) using coenzyme B (CoB or 7-mercaptoheptanoylthreonine phosphate) as reductant which results in the production of methane and the mixed heterodisulfide of CoB and CoM (CoM-S-S-CoB). This is the final step in methanogenesis. The polypeptide is Methyl-coenzyme M reductase II subunit gamma (mrtG) (Methanothermobacter marburgensis (strain ATCC BAA-927 / DSM 2133 / JCM 14651 / NBRC 100331 / OCM 82 / Marburg) (Methanobacterium thermoautotrophicum)).